A 270-amino-acid chain; its full sequence is Tryptophan synthase alpha chain (270 aa).

Active-site proton acceptor residues include E49 and D60.

The protein belongs to the TrpA family. In terms of assembly, tetramer of two alpha and two beta chains.

It catalyses the reaction (1S,2R)-1-C-(indol-3-yl)glycerol 3-phosphate + L-serine = D-glyceraldehyde 3-phosphate + L-tryptophan + H2O. It functions in the pathway amino-acid biosynthesis; L-tryptophan biosynthesis; L-tryptophan from chorismate: step 5/5. In terms of biological role, the alpha subunit is responsible for the aldol cleavage of indoleglycerol phosphate to indole and glyceraldehyde 3-phosphate. The sequence is that of Tryptophan synthase alpha chain from Thermobifida fusca (strain YX).